We begin with the raw amino-acid sequence, 545 residues long: Leucine-rich repeat LGI family member 2 (545 aa).

An N-terminal signal peptide occupies residues 1 to 28; it reads MALRRGGCGALGLLLLLLGAACLIPRSA. The LRRNT domain occupies 29 to 65; the sequence is QVRRLARCPATCSCTKESIICVGSSWVPRIVPGDISS. The N-linked (GlcNAc...) asparagine glycan is linked to N70. LRR repeat units follow at residues 86 to 107, 110 to 131, and 134 to 155; these read SLQLLLLNSNSFTIIRDDAFAG, HLEYLFIEGNKIETISRNAFRG, and DLTHLSLANNHIKALPRDVFSD. An LRRCT domain is found at 167-217; that stretch reads NKFECDCKAKWLYLWLKMTNSTVSDVLCIGPPEYQEKKLNDVTSFDYECTT. A glycan (N-linked (GlcNAc...) asparagine) is linked at N186. EAR repeat units follow at residues 219–261, 265–307, 311–358, 360–403, 407–450, 452–494, and 498–540; these read DFVV…EWDH, NFRS…KYDE, KFVK…KWNS, GFYS…QWNK, KFVP…RWNS, QFVE…QWDK, and LFKK…EHII. N271 is a glycosylation site (N-linked (GlcNAc...) asparagine). Residue N402 is glycosylated (N-linked (GlcNAc...) asparagine).

As to expression, brain, heart and placenta.

It localises to the secreted. In terms of biological role, required for the development of soma-targeting inhibitory GABAergic synapses made by parvalbumin-positive basket cells. The chain is Leucine-rich repeat LGI family member 2 (LGI2) from Homo sapiens (Human).